The primary structure comprises 927 residues: MQGVSSALLLSAGQLGPGAAWYRQEGSSECSWLRRSQPSELRTNFSSRWPWPRNSESRRSERLQWPGPASAKPEVASCGDSRRDYSSLPARHLSSARESSMPGALGTVNPQPVRTLVPPTLDEPLPDALRPPDDSLLLWRGLTKGPNHMGRLRNAKIHVERAVKQKKIFMIHGRYPVIRCLLRQRGWVEKKMVHPPGTALPAPQKDLDSSMLGDSDATEDEDEEENEMFRESQLLDLDGFLEFDDLDGIHALMSRMVRNETPYLIWTTRRDVLDCRFLSKDQMINHYARAGSFTTKVGLCLNLRNLPWFDEADADSFFPRCYRLGAEDDKKAFIEDFWLTAARNVLKLVVKLEEKSQSISIQAREEEAPEDTQPKKQEKKLVTVSSDFVDEALSACQEHLSSIAHKDIDKDPNSPLYLSPDDWSQFLQRYYQIVHEGAELRYLEVQVQRCEDILQQLQNVVPQLDMEGDRNIWIVKPGAKSRGRGIMCMNRLDEMLKLVDCNPMLMKDGKWIVQKYIERPLLIFGTKFDLRQWFLVTDWNPLTVWFYRDSYIRFSTQPFSLKNLDNSVHLCNNSIQRHLEASCHRHPMLPPDNMWSSQRFQAHLQEVDAPKAWSSVIVPGMKAAVIHALQTSQDNVQCRKASFELYGADFVFGEDFQPWLIEINASPTMAPSTAVTARLCAGVQADTLRVVIDRRLDRSCDTGAFELIYKQPAVEVPQYVGIRLLVEGSTIKKPVPVGHRRTGVRSSLPHLLTQQGSGESKDSGSPTHRSASRKNARAESLEHTEKPEPAAVASVSGKGKKAPFHFPSLHSKAWLPSPRVHRPQGRVLRLQHDQLVGSKALSTTGKALMTLPTAKVLMSFPPHPDLKLAPSMLKPGKVGFELCCTTWRVVLSGGIGEEGHRQRAAPRPSSAPGKGLSSTEPCSKTET.

A compositionally biased stretch (polar residues) spans 35-47 (RSQPSELRTNFSS). 2 disordered regions span residues 35-113 (RSQP…PQPV) and 194-227 (HPPG…EENE). Acidic residues predominate over residues 216–226 (DATEDEDEEEN). The region spanning 345–702 (VLKLVVKLEE…DRRLDRSCDT (358 aa)) is the TTL domain. Residues Lys-476, 482-483 (RG), 514-517 (QKYI), 527-529 (KFD), and 571-572 (CN) each bind ATP. A protein is bound at residue Arg-482. Positions 649, 662, and 664 each coordinate Mg(2+). Residue Glu-662 participates in ATP binding. 2 disordered regions span residues 735 to 799 (VPVG…SGKG) and 897 to 927 (EEGH…KTET). Residues 752–769 (LTQQGSGESKDSGSPTHR) are compositionally biased toward polar residues. The segment covering 776 to 788 (ARAESLEHTEKPE) has biased composition (basic and acidic residues). Residues 916 to 927 (LSSTEPCSKTET) show a composition bias toward polar residues.

Requires Mg(2+) as cofactor. Highly expressed in brain and testis. Expressed in heart, kidney, liver, lung, muscle, spleen, trachea and colon. Expressed in sperm flagellum. In the brain, specifically expressed in ependymal cilia.

The protein localises to the cytoplasm. The protein resides in the cytoskeleton. Its subcellular location is the cell projection. It is found in the cilium. It localises to the cilium axoneme. The protein localises to the flagellum axoneme. The enzyme catalyses L-glutamyl-[protein] + glycine + ATP = glycyl-L-glutamyl-[protein] + ADP + phosphate + H(+). Its function is as follows. Monoglycylase which modifies alpha- and beta-tubulin, adding a single glycine on the gamma-carboxyl groups of specific glutamate residues to generate monoglycine side chains within the C-terminal tail of tubulin. Not involved in elongation step of the polyglycylation reaction. Preferentially glycylates a beta-tail peptide over the alpha-tail, although shifts its preference toward alpha-tail as beta-tail glutamylation increases. Competes with polyglutamylases for modification site on beta-tubulin substrate, thereby creating an anticorrelation between glycylation and glutamylation reactions. Together with TTLL8, mediates microtubule glycylation of primary and motile cilia, which is essential for their stability and maintenance. Involved in microtubule glycylation of primary cilia in colon which controls cell proliferation of epithelial cells and plays an essential role in colon cancer development. Together with TTLL8, glycylates sperm flagella which regulates axonemal dynein motor activity, thereby controlling flagellar beat, directional sperm swimming and male fertility. The protein is Tubulin monoglycylase TTLL3 of Mus musculus (Mouse).